We begin with the raw amino-acid sequence, 341 residues long: HTH-type transcriptional repressor PurR (341 aa).

Residues Ala-2–Val-56 form the HTH lacI-type domain. A DNA-binding region (H-T-H motif) is located at residues Ile-4–Asn-23. The DNA-binding element occupies Ser-48–Val-56. 5 residues coordinate hypoxanthine: Tyr-73, Arg-190, Thr-192, Phe-221, and Asp-275.

In terms of assembly, homodimer.

The protein operates within purine metabolism; purine nucleotide biosynthesis [regulation]. Its function is as follows. Is the main repressor of the genes involved in the de novo synthesis of purine nucleotides, regulating purB, purC, purEK, purF, purHD, purL, purMN and guaBA expression. PurR is allosterically activated to bind its cognate DNA by binding the purine corepressors, hypoxanthine or guanine, thereby effecting transcription repression. The protein is HTH-type transcriptional repressor PurR of Yersinia enterocolitica serotype O:8 / biotype 1B (strain NCTC 13174 / 8081).